The primary structure comprises 316 residues: tRNA dimethylallyltransferase (316 aa).

17-24 is a binding site for ATP; the sequence is GPTASGKT. Substrate is bound at residue 19–24; that stretch reads TASGKT. Interaction with substrate tRNA stretches follow at residues 42–45, 166–170, 247–252, and 280–287; these read DSAL, QRLSR, RCVGYR, and KRQITWLR.

The protein belongs to the IPP transferase family. Monomer. Mg(2+) serves as cofactor.

The enzyme catalyses adenosine(37) in tRNA + dimethylallyl diphosphate = N(6)-dimethylallyladenosine(37) in tRNA + diphosphate. In terms of biological role, catalyzes the transfer of a dimethylallyl group onto the adenine at position 37 in tRNAs that read codons beginning with uridine, leading to the formation of N6-(dimethylallyl)adenosine (i(6)A). The polypeptide is tRNA dimethylallyltransferase (Cronobacter sakazakii (strain ATCC BAA-894) (Enterobacter sakazakii)).